Consider the following 238-residue polypeptide: Probable transcriptional regulatory protein llmg_0242 (238 aa).

It belongs to the TACO1 family. YeeN subfamily.

Its subcellular location is the cytoplasm. The polypeptide is Probable transcriptional regulatory protein llmg_0242 (Lactococcus lactis subsp. cremoris (strain MG1363)).